A 288-amino-acid chain; its full sequence is Energy-coupling factor transporter ATP-binding protein EcfA2 (288 aa).

Residues 3–245 form the ABC transporter domain; it reads IEFKNVDYIY…PDWLKKHFLD (243 aa). Residue 40–47 coordinates ATP; the sequence is GHTGSGKS.

This sequence belongs to the ABC transporter superfamily. Energy-coupling factor EcfA family. In terms of assembly, forms a stable energy-coupling factor (ECF) transporter complex composed of 2 membrane-embedded substrate-binding proteins (S component), 2 ATP-binding proteins (A component) and 2 transmembrane proteins (T component).

Its subcellular location is the cell membrane. Its function is as follows. ATP-binding (A) component of a common energy-coupling factor (ECF) ABC-transporter complex. Unlike classic ABC transporters this ECF transporter provides the energy necessary to transport a number of different substrates. The polypeptide is Energy-coupling factor transporter ATP-binding protein EcfA2 (Lactobacillus gasseri (strain ATCC 33323 / DSM 20243 / BCRC 14619 / CIP 102991 / JCM 1131 / KCTC 3163 / NCIMB 11718 / NCTC 13722 / AM63)).